A 900-amino-acid polypeptide reads, in one-letter code: Zinc finger protein 62 homolog (900 aa).

Positions 1–97 (MSHLKTSTED…EASEKSLHLS (97 aa)) are disordered. Residue lysine 5 forms a Glycyl lysine isopeptide (Lys-Gly) (interchain with G-Cter in SUMO2) linkage. Residues 9 to 18 (EDEEPTEEYE) show a composition bias toward acidic residues. Over residues 47-73 (SKVENQQKKPVENRMKEDKSSIREAIS) the composition is skewed to basic and acidic residues. Residues lysine 48, lysine 62, lysine 65, lysine 82, and lysine 92 each participate in a glycyl lysine isopeptide (Lys-Gly) (interchain with G-Cter in SUMO2) cross-link. Positions 83–94 (TEQEGEASEKSL) are enriched in basic and acidic residues. 13 consecutive C2H2-type zinc fingers follow at residues 225–247 (CKCD…KRIH), 253–275 (YECG…KRIH), 281–303 (YECD…KRIH), 309–331 (YECD…KSIH), 337–359 (YKCD…KVIH), 365–387 (YECD…KRIH), 393–415 (YKCD…KSIH), 421–443 (HECK…RTIH), 449–471 (YVCD…RRLH), 477–499 (YKCD…KGIH), 505–527 (YKCS…KRIH), 533–555 (FGCD…KRIH), and 561–583 (YKCE…KSVH). Residue lysine 587 forms a Glycyl lysine isopeptide (Lys-Gly) (interchain with G-Cter in SUMO2) linkage. 10 consecutive C2H2-type zinc fingers follow at residues 589–611 (FKCD…KKVH), 617–639 (YKCD…RRVH), 645–667 (YECD…KRIH), 673–695 (YECD…KSTH), 701–723 (HTCD…KRVH), 729–751 (FKCV…KRIH), 757–779 (YVCD…KRIH), 785–807 (YECD…KSVH), 813–834 (YNCE…KRIH), and 840–862 (YRCN…KRTH). A Glycyl lysine isopeptide (Lys-Gly) (interchain with G-Cter in SUMO2) cross-link involves residue lysine 748. Residue lysine 882 forms a Glycyl lysine isopeptide (Lys-Gly) (interchain with G-Cter in SUMO2) linkage.

This sequence belongs to the krueppel C2H2-type zinc-finger protein family.

It localises to the nucleus. Its function is as follows. May play a role in differentiating skeletal muscle. This chain is Zinc finger protein 62 homolog (ZFP62), found in Homo sapiens (Human).